A 464-amino-acid polypeptide reads, in one-letter code: Phosphoenolpyruvate carboxylase (464 aa).

This sequence belongs to the PEPCase type 2 family. As to quaternary structure, homotetramer. The cofactor is Mg(2+).

The catalysed reaction is oxaloacetate + phosphate = phosphoenolpyruvate + hydrogencarbonate. In terms of biological role, catalyzes the irreversible beta-carboxylation of phosphoenolpyruvate (PEP) to form oxaloacetate (OAA), a four-carbon dicarboxylic acid source for the tricarboxylic acid cycle. This is Phosphoenolpyruvate carboxylase from Thermofilum pendens (strain DSM 2475 / Hrk 5).